The chain runs to 268 residues: MADS-box protein FBP24 (268 aa).

An MADS-box domain is found at 4 to 64; sequence MGRGKIEVKR…GKLFEYCSQP (61 aa). Residues 88 to 178 enclose the K-box domain; that stretch reads RVQLYDEVAK…YQWLMNNQMY (91 aa). Residues 243–268 are disordered; the sequence is NSISPYRLQPSHPNLQDSHVHGPSYD.

Its subcellular location is the nucleus. Its function is as follows. Probable transcription factor. This chain is MADS-box protein FBP24 (FBP24), found in Petunia hybrida (Petunia).